Consider the following 65-residue polypeptide: Adrenergic toxin rho-elapitoxin-Dp1a (65 aa).

Intrachain disulfides connect cysteine 3–cysteine 24, cysteine 17–cysteine 42, cysteine 46–cysteine 57, and cysteine 58–cysteine 63.

It belongs to the three-finger toxin family. Short-chain subfamily. Aminergic toxin sub-subfamily. Expressed by the venom gland.

It is found in the secreted. Its function is as follows. This toxin shows activities on different G-protein coupled receptors. It is highly potent on various alpha-adrenoceptors (ADRA) (subnanomolar affinity for ADRA1A). Order of potency is the following: ADRA1A &gt; ADRA1B &gt; ADRA1D &gt; ADRA2C. It is also found to reversibly bind to muscarinic acetylcholine receptors (CHRM), but the affinity is much weaker (CHRM1 and CHRM2, Ki&gt;1 uM; CHRM3, Ki=140 nM; CHRM4, Ki=120 nM; CHRM5, Ki=350 nM). The sequence is that of Adrenergic toxin rho-elapitoxin-Dp1a from Dendroaspis polylepis polylepis (Black mamba).